Here is a 235-residue protein sequence, read N- to C-terminus: Chaperone protein TorD (235 aa).

This sequence belongs to the TorD/DmsD family. TorD subfamily.

The protein localises to the cytoplasm. Functionally, involved in the biogenesis of TorA. Acts on TorA before the insertion of the molybdenum cofactor and, as a result, probably favors a conformation of the apoenzyme that is competent for acquiring the cofactor. In Shewanella amazonensis (strain ATCC BAA-1098 / SB2B), this protein is Chaperone protein TorD.